The chain runs to 216 residues: Uracil phosphoribosyltransferase (216 aa).

5-phospho-alpha-D-ribose 1-diphosphate is bound by residues R85, R110, and 135-143 (DPMVATGYS). Residues I200 and 205-207 (GDA) contribute to the uracil site. 5-phospho-alpha-D-ribose 1-diphosphate is bound at residue D206.

It belongs to the UPRTase family. It depends on Mg(2+) as a cofactor.

The catalysed reaction is UMP + diphosphate = 5-phospho-alpha-D-ribose 1-diphosphate + uracil. It participates in pyrimidine metabolism; UMP biosynthesis via salvage pathway; UMP from uracil: step 1/1. Allosterically activated by GTP. In terms of biological role, catalyzes the conversion of uracil and 5-phospho-alpha-D-ribose 1-diphosphate (PRPP) to UMP and diphosphate. The chain is Uracil phosphoribosyltransferase from Burkholderia vietnamiensis (strain G4 / LMG 22486) (Burkholderia cepacia (strain R1808)).